The primary structure comprises 1363 residues: Vascular endothelial growth factor receptor 3 (1363 aa).

Positions 1–24 are cleaved as a signal peptide; the sequence is MQRGAALCLRLWLCLGLLDGLVSG. Residues 25–775 lie on the Extracellular side of the membrane; that stretch reads YSMTPPTLNI…EGSEDKGSME (751 aa). Ig-like C2-type domains follow at residues 30–127, 151–213, 219–326, 331–415, 422–552, 555–671, and 678–764; these read PTLN…TAAS, KDAM…WGDQ, PFLV…TEVI, PFIS…ISLE, PQIH…FYVT, PDGF…KYLS, and PRLT…ASVA. N33, N104, N166, N251, N299, and N411 each carry an N-linked (GlcNAc...) asparagine glycan. Cystine bridges form between C51–C111 and C158–C206. C252 and C310 are joined by a disulfide. Intrachain disulfides connect C445/C534, C466/C486, and C578/C653. Residues N515, N527, N594, N683, and N690 are each glycosylated (N-linked (GlcNAc...) asparagine). C699 and C751 form a disulfide bridge. N758 carries an N-linked (GlcNAc...) asparagine glycan. A helical transmembrane segment spans residues 776–796; that stretch reads IVILVGTGVIAVFFWVLLLLI. Topologically, residues 797-1363 are cytoplasmic; that stretch reads FCNMRRPAHA…RVTFFTDNSY (567 aa). Phosphotyrosine; by SRC occurs at positions 830, 833, and 853. Positions 845-1173 constitute a Protein kinase domain; sequence LHLGRVLGYG…ELVEILGDLL (329 aa). Residues 851 to 859 and K879 contribute to the ATP site; that span reads LGYGAFGKV. Residue D1037 is the Proton acceptor of the active site. Y1063 carries the post-translational modification Phosphotyrosine; by autocatalysis and SRC. Y1068, Y1230, Y1231, and Y1265 each carry phosphotyrosine; by autocatalysis. Residues 1291-1331 are disordered; the sequence is HRQESGFSCKGPGQNVAVTRAHPDSQGRRRRPERGARGGQV. Y1333 and Y1337 each carry phosphotyrosine; by autocatalysis and SRC. Phosphotyrosine; by autocatalysis is present on Y1363.

It belongs to the protein kinase superfamily. Tyr protein kinase family. CSF-1/PDGF receptor subfamily. As to quaternary structure, interacts with VEGFC and VEGFD. Monomer in the absence of bound VEGFC or VEGFD. Homodimer in the presence of bound VEGFC or VEGFD. Can also form a heterodimer with KDR. Interacts with PTPN14; the interaction is enhanced by stimulation with VEGFC. Interacts with CRK, GRB2, PTK2/FAK1, SHC1, PIK3R1 and PTPN11/SHP-2. Identified in a complex with SRC and ITGB1. In terms of processing, autophosphorylated on tyrosine residues upon ligand binding. Autophosphorylation occurs in trans, i.e. one subunit of the dimeric receptor phosphorylates tyrosine residues on the other subunit. Phosphorylation in response to H(2)O(2) is mediated by a process that requires SRC and PRKCD activity. Phosphorylation at Tyr-1068 is required for autophosphorylation at additional tyrosine residues. Phosphorylation at Tyr-1063 and Tyr-1337 is important for interaction with CRK and subsequent activation of MAPK8. Phosphorylation at Tyr-1230, Tyr-1231 and Tyr-1337 is important for interaction with GRB2 and subsequent activation of the AKT1 and MAPK1/ERK2 and/or MAPK3/ERK1 signaling pathways. In response to endothelial cell adhesion onto collagen, can also be phosphorylated in the absence of FLT4 kinase activity by SRC at Tyr-830, Tyr-833, Tyr-853, Tyr-1063, Tyr-1333, and Tyr-1337. Detected in endothelial cells (at protein level). Widely expressed. Detected in fetal spleen, lung and brain. Detected in adult liver, muscle, thymus, placenta, lung, testis, ovary, prostate, heart, and kidney.

It is found in the cell membrane. Its subcellular location is the cytoplasm. It localises to the nucleus. The protein resides in the secreted. It catalyses the reaction L-tyrosyl-[protein] + ATP = O-phospho-L-tyrosyl-[protein] + ADP + H(+). Its activity is regulated as follows. Present in an inactive conformation in the absence of bound ligand. Binding of VEGFC or VEGFD leads to dimerization and activation by autophosphorylation on tyrosine residues. Inhibited by MAZ51. Tyrosine-protein kinase that acts as a cell-surface receptor for VEGFC and VEGFD, and plays an essential role in adult lymphangiogenesis and in the development of the vascular network and the cardiovascular system during embryonic development. Promotes proliferation, survival and migration of endothelial cells, and regulates angiogenic sprouting. Signaling by activated FLT4 leads to enhanced production of VEGFC, and to a lesser degree VEGFA, thereby creating a positive feedback loop that enhances FLT4 signaling. Modulates KDR signaling by forming heterodimers. The secreted isoform 3 may function as a decoy receptor for VEGFC and/or VEGFD and play an important role as a negative regulator of VEGFC-mediated lymphangiogenesis and angiogenesis. Binding of vascular growth factors to isoform 1 or isoform 2 leads to the activation of several signaling cascades; isoform 2 seems to be less efficient in signal transduction, because it has a truncated C-terminus and therefore lacks several phosphorylation sites. Mediates activation of the MAPK1/ERK2, MAPK3/ERK1 signaling pathway, of MAPK8 and the JUN signaling pathway, and of the AKT1 signaling pathway. Phosphorylates SHC1. Mediates phosphorylation of PIK3R1, the regulatory subunit of phosphatidylinositol 3-kinase. Promotes phosphorylation of MAPK8 at 'Thr-183' and 'Tyr-185', and of AKT1 at 'Ser-473'. The polypeptide is Vascular endothelial growth factor receptor 3 (FLT4) (Homo sapiens (Human)).